The chain runs to 852 residues: Sarcoplasmic reticulum histidine-rich calcium-binding protein (852 aa).

The signal sequence occupies residues 1 to 27 (MGCRGPWLHTCLLWAAVASLLLPPAVT). Q28 is subject to Pyrrolidone carboxylic acid. Residues 44-58 (AGAPGPSGEAAAAGL) are compositionally biased toward low complexity. The tract at residues 44 to 770 (AGAPGPSGEA…EDTGPEDTQE (727 aa)) is disordered. 2 consecutive repeat copies span residues 59–79 (GHHG…SMEN) and 80–100 (GHHF…SREY). Residues 59–100 (GHHGHSHRSPGEENEDVSMENGHHFWSHRDHGETDDEVSREY) form a 2 X approximate tandem repeats region. Residues 79–101 (NGHHFWSHRDHGETDDEVSREYG) show a composition bias toward basic and acidic residues. Residue S120 is modified to Phosphoserine. The span at 146–157 (LAEHGSHGHGHE) shows a compositional bias: basic and acidic residues. Composition is skewed to acidic residues over residues 184–195 (EEGEEEEEEEEV), 208–217 (DEEDEDDDST), 233–246 (EEDE…GDST), 261–275 (EEED…GDST), 291–303 (EEDE…GDST), 319–332 (EEDD…GDST), 348–360 (EEDE…GDST), 376–388 (EEDE…GDST), 404–416 (EEDE…GDST), 432–444 (EEDE…GDST), 459–468 (EEEDEDDDDE), and 484–497 (EDDG…DDST). 10 repeat units span residues 199–224 (HRHR…RHQA), 225–253 (HRHR…HHQA), 254–282 (HRHR…RHQA), 283–310 (HRHR…RHQA), 311–339 (HRHR…RHQA), 340–367 (HRHR…RHQA), 368–395 (HRHR…RHQA), 396–423 (HRHR…HHQA), 424–451 (HRHR…RHQA), and 452–470 (HRHR…DEGE). The interval 199–470 (HRHRGHGKED…EDEDDDDEGE (272 aa)) is 10 X tandem repeats, acidic. The interval 471 to 585 (HHHVPHRGHR…HHVASHPPPG (115 aa)) is 4 X approximate tandem repeats. The segment covering 509–536 (HGKEEAEVTSDEHHHHVPDHGHQGHGDK) has biased composition (basic and acidic residues). Phosphoserine occurs at positions 518, 544, and 614. 3 stretches are compositionally biased toward basic and acidic residues: residues 587-619 (RSRE…ERGH), 630-646 (PPED…KEEV), and 658-681 (DGSR…HHSL). The segment covering 722–733 (EEEEEEEEEEEE) has biased composition (acidic residues). A compositionally biased stretch (low complexity) spans 746-757 (SGREAAGGASSE). The span at 758 to 769 (ESAEDTGPEDTQ) shows a compositional bias: acidic residues. The interval 780-826 (CGYCTFCNRCTECEHCHCDEDSMGEHCDQCQHCQFCYLCPLVCETVC) is metal-binding.

The protein belongs to the HRC family. Post-translationally, the N-terminus is blocked.

The protein localises to the sarcoplasmic reticulum lumen. May play a role in the regulation of calcium sequestration or release in the SR of skeletal and cardiac muscle. This is Sarcoplasmic reticulum histidine-rich calcium-binding protein (HRC) from Oryctolagus cuniculus (Rabbit).